The following is a 326-amino-acid chain: Beta-ketoacyl-[acyl-carrier-protein] synthase III (326 aa).

Residues Cys120 and His253 contribute to the active site. Positions 254 to 258 (QANIR) are ACP-binding. Asn283 is a catalytic residue.

This sequence belongs to the thiolase-like superfamily. FabH family. As to quaternary structure, homodimer.

The protein localises to the cytoplasm. It catalyses the reaction malonyl-[ACP] + acetyl-CoA + H(+) = 3-oxobutanoyl-[ACP] + CO2 + CoA. It participates in lipid metabolism; fatty acid biosynthesis. Catalyzes the condensation reaction of fatty acid synthesis by the addition to an acyl acceptor of two carbons from malonyl-ACP. Catalyzes the first condensation reaction which initiates fatty acid synthesis and may therefore play a role in governing the total rate of fatty acid production. Possesses both acetoacetyl-ACP synthase and acetyl transacylase activities. Its substrate specificity determines the biosynthesis of branched-chain and/or straight-chain of fatty acids. This Cupriavidus pinatubonensis (strain JMP 134 / LMG 1197) (Cupriavidus necator (strain JMP 134)) protein is Beta-ketoacyl-[acyl-carrier-protein] synthase III.